Consider the following 120-residue polypeptide: Large ribosomal subunit protein bL17 (120 aa).

It belongs to the bacterial ribosomal protein bL17 family. Part of the 50S ribosomal subunit. Contacts protein L32.

The chain is Large ribosomal subunit protein bL17 from Desulforapulum autotrophicum (strain ATCC 43914 / DSM 3382 / VKM B-1955 / HRM2) (Desulfobacterium autotrophicum).